The primary structure comprises 529 residues: Bifunctional purine biosynthesis protein PurH (529 aa).

Positions 1 to 148 (MQQRRPVRRA…KNHKDVAIVV (148 aa)) constitute an MGS-like domain.

Belongs to the PurH family.

The enzyme catalyses (6R)-10-formyltetrahydrofolate + 5-amino-1-(5-phospho-beta-D-ribosyl)imidazole-4-carboxamide = 5-formamido-1-(5-phospho-D-ribosyl)imidazole-4-carboxamide + (6S)-5,6,7,8-tetrahydrofolate. The catalysed reaction is IMP + H2O = 5-formamido-1-(5-phospho-D-ribosyl)imidazole-4-carboxamide. It participates in purine metabolism; IMP biosynthesis via de novo pathway; 5-formamido-1-(5-phospho-D-ribosyl)imidazole-4-carboxamide from 5-amino-1-(5-phospho-D-ribosyl)imidazole-4-carboxamide (10-formyl THF route): step 1/1. Its pathway is purine metabolism; IMP biosynthesis via de novo pathway; IMP from 5-formamido-1-(5-phospho-D-ribosyl)imidazole-4-carboxamide: step 1/1. This chain is Bifunctional purine biosynthesis protein PurH, found in Salmonella heidelberg (strain SL476).